A 296-amino-acid chain; its full sequence is MTELASPTSFSMPDIGKSPVVLTARRLMRRRSFRIGLVLLLIVVLAAVLAPWITNGKPNATSVRMRFQPPGLEHLFGTDNFGRDLWTRVLYGAQVSLWIGLTVAVLSAILGAIIGIAAAWYRRFDTLLMRVMDALMAFPAILLAIGISAALGPHLSSVIIALTSAYIPRCARIVRASALVLRETDYVDAARLAGASDLRIITRHILPNCLAPLLVTLTFVFAYAILAEATLSFLGIGTPPPHASWGSIVAQGRDYSVDAWWIMLFPGIAITISALAINLIGDGLRDVLDPRLKVEG.

Transmembrane regions (helical) follow at residues 35-55 (IGLV…WITN), 97-117 (LWIG…IGIA), 131-151 (VMDA…SAAL), 205-225 (ILPN…AYAI), 229-249 (ATLS…GSIV), and 260-280 (WWIM…INLI). Residues 97–281 (LWIGLTVAVL…ISALAINLIG (185 aa)) enclose the ABC transmembrane type-1 domain.

Belongs to the binding-protein-dependent transport system permease family. In terms of assembly, the complex is composed of two ATP-binding proteins (BRA1094), two transmembrane proteins (BRA1092 and BRA1093) and a solute-binding protein (BRA1090).

It is found in the cell inner membrane. Its function is as follows. Probably part of an ABC transporter complex that could be involved in peptide import. Probably responsible for the translocation of the substrate across the membrane. This is Putative peptide transport system permease protein BRA1093/BS1330_II1085 from Brucella suis biovar 1 (strain 1330).